The following is an 80-amino-acid chain: Late cornified envelope protein 6A (80 aa).

Residues 1-10 (MSQQKQQSWK) are compositionally biased toward polar residues. Disordered regions lie at residues 1-21 (MSQQKQQSWKPPNVPKCSPPQ) and 35-60 (GAPHSEGCHSSSQRPEVQKPRRARQK).

Belongs to the LCE family.

Functionally, precursors of the cornified envelope of the stratum corneum. The sequence is that of Late cornified envelope protein 6A (LCE6A) from Homo sapiens (Human).